Here is a 463-residue protein sequence, read N- to C-terminus: Bifunctional protein HldE (463 aa).

Residues 1–315 (MRKILVIGDL…LILNQTHPKI (315 aa)) form a ribokinase region. 191–194 (NRFE) is an ATP binding site. Residue Asp260 is part of the active site. A cytidylyltransferase region spans residues 334–463 (FTNGCFDILH…IEKIKRAYND (130 aa)).

The protein in the N-terminal section; belongs to the carbohydrate kinase PfkB family. It in the C-terminal section; belongs to the cytidylyltransferase family. Homodimer.

It catalyses the reaction D-glycero-beta-D-manno-heptose 7-phosphate + ATP = D-glycero-beta-D-manno-heptose 1,7-bisphosphate + ADP + H(+). The catalysed reaction is D-glycero-beta-D-manno-heptose 1-phosphate + ATP + H(+) = ADP-D-glycero-beta-D-manno-heptose + diphosphate. Its pathway is nucleotide-sugar biosynthesis; ADP-L-glycero-beta-D-manno-heptose biosynthesis; ADP-L-glycero-beta-D-manno-heptose from D-glycero-beta-D-manno-heptose 7-phosphate: step 1/4. It functions in the pathway nucleotide-sugar biosynthesis; ADP-L-glycero-beta-D-manno-heptose biosynthesis; ADP-L-glycero-beta-D-manno-heptose from D-glycero-beta-D-manno-heptose 7-phosphate: step 3/4. Functionally, catalyzes the phosphorylation of D-glycero-D-manno-heptose 7-phosphate at the C-1 position to selectively form D-glycero-beta-D-manno-heptose-1,7-bisphosphate. Its function is as follows. Catalyzes the ADP transfer from ATP to D-glycero-beta-D-manno-heptose 1-phosphate, yielding ADP-D-glycero-beta-D-manno-heptose. The polypeptide is Bifunctional protein HldE (Helicobacter acinonychis (strain Sheeba)).